We begin with the raw amino-acid sequence, 506 residues long: Maturase K (506 aa).

Belongs to the intron maturase 2 family. MatK subfamily.

Its subcellular location is the plastid. The protein localises to the chloroplast. Usually encoded in the trnK tRNA gene intron. Probably assists in splicing its own and other chloroplast group II introns. The sequence is that of Maturase K from Ocimum basilicum (Sweet basil).